A 365-amino-acid polypeptide reads, in one-letter code: Transcription factor TCP2 (365 aa).

In terms of domain architecture, TCP spans 42–100 (GKDRHSKVLTSKGPRDRRVRLSVSTALQFYDLQDRLGYDQPSKAVEWLIKAAEDSISEL). Over residues 130–150 (KSACSSNSDTSKNSSGLSLSR) the composition is skewed to low complexity. Disordered regions lie at residues 130–202 (KSAC…SAPS) and 220–245 (QTHF…HPHH). Positions 151-172 (SELRDKARERARERTAKETKER) constitute a R domain. Over residues 151–176 (SELRDKARERARERTAKETKERDHNH) the composition is skewed to basic and acidic residues. The span at 177–202 (TSFTDLLNSGSDPVNSNRQWMASAPS) shows a compositional bias: polar residues.

As to quaternary structure, interacts with SPL. Interacts with CRY1. Expressed in cotyledons, particularly in the vascular region, in leaves, roots, buds, flowers and immature siliques.

It localises to the nucleus. In terms of biological role, plays a pivotal role in the control of morphogenesis of shoot organs by negatively regulating the expression of boundary-specific genes such as CUC genes, probably through the induction of miRNA (e.g. miR164). Participates in ovule development. Promotes light-regulated transcription of CHS, CAB, HYH and HY5. Positively regulates photomorphogenesis (e.g. hypocotyl elongation inhibition and cotyledon opening in response to blue light). This is Transcription factor TCP2 from Arabidopsis thaliana (Mouse-ear cress).